Reading from the N-terminus, the 447-residue chain is Argininosuccinate synthase (447 aa).

ATP-binding positions include 20 to 28 and alanine 46; that span reads AFSGGLDTS. Position 102 (tyrosine 102) interacts with L-citrulline. ATP contacts are provided by glycine 132 and threonine 134. Residues threonine 134, asparagine 138, and aspartate 139 each contribute to the L-aspartate site. Residue asparagine 138 coordinates L-citrulline. Residue aspartate 139 coordinates ATP. Arginine 142 and serine 195 together coordinate L-citrulline. Position 197 (aspartate 197) interacts with ATP. 3 residues coordinate L-citrulline: threonine 204, glutamate 206, and glutamate 283.

This sequence belongs to the argininosuccinate synthase family. Type 2 subfamily. In terms of assembly, homotetramer.

Its subcellular location is the cytoplasm. It carries out the reaction L-citrulline + L-aspartate + ATP = 2-(N(omega)-L-arginino)succinate + AMP + diphosphate + H(+). It functions in the pathway amino-acid biosynthesis; L-arginine biosynthesis; L-arginine from L-ornithine and carbamoyl phosphate: step 2/3. In Neisseria meningitidis serogroup B (strain ATCC BAA-335 / MC58), this protein is Argininosuccinate synthase (argG).